Here is a 216-residue protein sequence, read N- to C-terminus: Thiopurine S-methyltransferase (216 aa).

Residues W10, L45, E66, and R123 each coordinate S-adenosyl-L-methionine.

This sequence belongs to the class I-like SAM-binding methyltransferase superfamily. TPMT family.

Its subcellular location is the cytoplasm. It catalyses the reaction S-adenosyl-L-methionine + a thiopurine = S-adenosyl-L-homocysteine + a thiopurine S-methylether.. This is Thiopurine S-methyltransferase from Pseudomonas putida (strain GB-1).